The primary structure comprises 960 residues: Dynamin-like GTPase OPA1, mitochondrial (960 aa).

The N-terminal 87 residues, 1–87 (MWRAGRAAVA…IKYGYQPRRN (87 aa)), are a transit peptide targeting the mitochondrion. At 88–96 (FWPARLAAR) the chain is on the mitochondrial matrix side. The helical transmembrane segment at 97–113 (LLKLRYIILGSAVGGGY) threads the bilayer. Residues 114–770 (TAKKTFDEWK…NAIENMIGPD (657 aa)) lie on the Mitochondrial intermembrane side of the membrane. The stretch at 210–254 (SDKEKIDQLQEELLHTQLKYQRILERLEKENKELRKLVLQKDDKG) forms a coiled coil. The LQQQIQ motif signature appears at 217 to 222 (QLQEEL). An N6-acetyllysine modification is found at lysine 228. One can recognise a Dynamin-type G domain in the interval 285–561 (QDHLPRVVVV…FWKMVRESVE (277 aa)). The G1 motif stretch occupies residues 295 to 302 (GDQSAGKT). Serine 298, glycine 300, lysine 301, threonine 302, serine 303, and glycine 317 together coordinate GTP. Residue threonine 302 coordinates Mg(2+). Positions 321-324 (MMTR) are G2 motif. Residues threonine 323 and aspartate 398 each coordinate Mg(2+). Residues 398-401 (DLPG) are G3 motif. Positions 467 to 470 (TKVD) are G4 motif. Lysine 468, aspartate 470, and threonine 503 together coordinate GTP. The tract at residues 501 to 504 (VVTG) is G5 motif. Stalk region regions lie at residues 589–836 (DRNE…IKDT) and 874–928 (CNDV…VKLL). The paddle region stretch occupies residues 736–856 (SDKQQWDAAI…KTALNHCNLC (121 aa)). The stretch at 771-781 (WKKRWMYWKNR) is an intramembrane region. Residues 782 to 960 (TQEQCVHNET…AFIEALHQEK (179 aa)) are Mitochondrial intermembrane-facing. Cysteine 856 and cysteine 874 are oxidised to a cystine. Residues 895–960 (RQQLTNTEVR…AFIEALHQEK (66 aa)) adopt a coiled-coil conformation.

Belongs to the TRAFAC class dynamin-like GTPase superfamily. Dynamin/Fzo/YdjA family. In terms of assembly, oligomeric complex consisting of membrane-bound and soluble forms of OPA1. Interacts with RCC1L; RCC1L acts as a guanine nucleotide exchange factor (GEF) for OPA1 by exchanging bound GDP for free GTP. Interacts with CHCHD3 and IMMT; these interactions occur preferentially with soluble OPA1 forms. Interacts with PRELID1. Cleaved by OMA1 or YME1L downstream of the transmembrane region in response to different signals to generate soluble forms. Cleaved by OMA1 at position S1 following stress conditions, generating the short soluble form (Dynamin-like GTPase OPA1, short form; S-OPA1). AFG3L2 is involved in the regulation of OMA1-dependent processing of OPA1. PARL-dependent proteolytic processing releases an antiapoptotic soluble form not required for mitochondrial fusion. Post-translationally, cleavage at position S2 by YME1L is required to mediate oxidative phosphorylation (OXPHOS)-induced mitochondrial fusion. Cleavage occurs in the sequence motif Leu-Gln-Gln-Gln-Ile-Gln (LQQQIQ). In terms of processing, cleavage at position S3 by YME1L is required for membrane tubulation. In terms of tissue distribution, detected in brain (at protein level). Detected in brain, brain stem, heart, kidney, liver and skeletal muscle.

Its subcellular location is the mitochondrion inner membrane. It localises to the mitochondrion intermembrane space. The catalysed reaction is GTP + H2O = GDP + phosphate + H(+). Activated by guanine nucleotide exchange factor RCC1L. Its function is as follows. Dynamin-related GTPase that is essential for normal mitochondrial morphology by mediating fusion of the mitochondrial inner membranes, regulating cristae morphology and maintaining respiratory chain function. Exists in two forms: the transmembrane, long form (Dynamin-like GTPase OPA1, long form; L-OPA1), which is tethered to the inner mitochondrial membrane, and the short soluble form (Dynamin-like GTPase OPA1, short form; S-OPA1), which results from proteolytic cleavage and localizes in the intermembrane space. Both forms (L-OPA1 and S-OPA1) cooperate to catalyze the fusion of the mitochondrial inner membrane. The equilibrium between L-OPA1 and S-OPA1 is essential: excess levels of S-OPA1, produced by cleavage by OMA1 following loss of mitochondrial membrane potential, lead to an impaired equilibrium between L-OPA1 and S-OPA1, inhibiting mitochondrial fusion. The balance between L-OPA1 and S-OPA1 also influences cristae shape and morphology. Involved in remodeling cristae and the release of cytochrome c during apoptosis. Proteolytic processing by PARL in response to intrinsic apoptotic signals may lead to disassembly of OPA1 oligomers and release of the caspase activator cytochrome C (CYCS) into the mitochondrial intermembrane space. Acts as a regulator of T-helper Th17 cells, which are characterized by cells with fused mitochondria with tight cristae, by mediating mitochondrial membrane remodeling: OPA1 is required for interleukin-17 (IL-17) production. Its role in mitochondrial morphology is required for mitochondrial genome maintenance. In terms of biological role, constitutes the transmembrane long form (L-OPA1) that plays a central role in mitochondrial inner membrane fusion and cristae morphology. L-OPA1 and the soluble short form (S-OPA1) form higher-order helical assemblies that coordinate the fusion of mitochondrial inner membranes. Inner membrane-anchored L-OPA1 molecules initiate membrane remodeling by recruiting soluble S-OPA1 to rapidly polymerize into a flexible cylindrical scaffold encaging the mitochondrial inner membrane. Once at the membrane surface, the formation of S-OPA1 helices induce bilayer curvature. OPA1 dimerization through the paddle region, which inserts into cardiolipin-containing membrane, promotes GTP hydrolysis and the helical assembly of a flexible OPA1 lattice on the membrane, which drives membrane curvature and mitochondrial fusion. Plays a role in the maintenance and remodeling of mitochondrial cristae, some invaginations of the mitochondrial inner membrane that provide an increase in the surface area. Probably acts by forming helical filaments at the inside of inner membrane tubes with the shape and dimensions of crista junctions. The equilibrium between L-OPA1 and S-OPA1 influences cristae shape and morphology: increased L-OPA1 levels promote cristae stacking and elongated mitochondria, while increased S-OPA1 levels correlated with irregular cristae packing and round mitochondria shape. Functionally, constitutes the soluble short form (S-OPA1) generated by cleavage by OMA1, which plays a central role in mitochondrial inner membrane fusion and cristae morphology. The transmembrane long form (L-OPA1) and the S-OPA1 form higher-order helical assemblies that coordinate the fusion of mitochondrial inner membranes. Inner membrane-anchored L-OPA1 molecules initiate membrane remodeling by recruiting soluble S-OPA1 to rapidly polymerize into a flexible cylindrical scaffold encaging the mitochondrial inner membrane. Once at the membrane surface, the formation of S-OPA1 helices induce bilayer curvature. OPA1 dimerization through the paddle region, which inserts into cardiolipin-containing membrane, promotes GTP hydrolysis and the helical assembly of a flexible OPA1 lattice on the membrane, which drives membrane curvature and mitochondrial fusion. Excess levels of S-OPA1 produced by cleavage by OMA1 following stress conditions that induce loss of mitochondrial membrane potential, lead to an impaired equilibrium between L-OPA1 and S-OPA1, thereby inhibiting mitochondrial fusion. Involved in mitochondrial safeguard in response to transient mitochondrial membrane depolarization by mediating flickering: cleavage by OMA1 leads to excess production of S-OPA1, preventing mitochondrial hyperfusion. Plays a role in the maintenance and remodeling of mitochondrial cristae, some invaginations of the mitochondrial inner membrane that provide an increase in the surface area. Probably acts by forming helical filaments at the inside of inner membrane tubes with the shape and dimensions of crista junctions. The equilibrium between L-OPA1 and S-OPA1 influences cristae shape and morphology: increased L-OPA1 levels promote cristae stacking and elongated mitochondria, while increased S-OPA1 levels correlated with irregular cristae packing and round mitochondria shape. Isoforms that contain the alternative exon 4b are required for mitochondrial genome maintenance, possibly by anchoring the mitochondrial nucleoids to the inner mitochondrial membrane. In Mus musculus (Mouse), this protein is Dynamin-like GTPase OPA1, mitochondrial.